Reading from the N-terminus, the 186-residue chain is Ribosome-recycling factor (186 aa).

Belongs to the RRF family.

It localises to the cytoplasm. In terms of biological role, responsible for the release of ribosomes from messenger RNA at the termination of protein biosynthesis. May increase the efficiency of translation by recycling ribosomes from one round of translation to another. The sequence is that of Ribosome-recycling factor from Pelodictyon phaeoclathratiforme (strain DSM 5477 / BU-1).